Reading from the N-terminus, the 621-residue chain is Anthranilate synthase alpha subunit 2, chloroplastic (621 aa).

Residues 1–87 (MSAVSISAVK…SEEQFTKFKK (87 aa)) constitute a chloroplast transit peptide.

This sequence belongs to the anthranilate synthase component I family. In terms of assembly, heterotetramer consisting of two non-identical subunits: a beta subunit and a large alpha subunit.

Its subcellular location is the plastid. The protein resides in the chloroplast. The enzyme catalyses chorismate + L-glutamine = anthranilate + pyruvate + L-glutamate + H(+). Its pathway is amino-acid biosynthesis; L-tryptophan biosynthesis; L-tryptophan from chorismate: step 1/5. Feedback inhibition by tryptophan. Its function is as follows. Part of a heterotetrameric complex that catalyzes the two-step biosynthesis of anthranilate, an intermediate in the biosynthesis of L-tryptophan. In the first step, the glutamine-binding beta subunit of anthranilate synthase (AS) provides the glutamine amidotransferase activity which generates ammonia as a substrate that, along with chorismate, is used in the second step, catalyzed by the large alpha subunit of AS to produce anthranilate. The sequence is that of Anthranilate synthase alpha subunit 2, chloroplastic (ASA2) from Arabidopsis thaliana (Mouse-ear cress).